We begin with the raw amino-acid sequence, 110 residues long: Nucleoid-associated protein CbuK_1603 (110 aa).

Belongs to the YbaB/EbfC family. As to quaternary structure, homodimer.

The protein localises to the cytoplasm. It localises to the nucleoid. Its function is as follows. Binds to DNA and alters its conformation. May be involved in regulation of gene expression, nucleoid organization and DNA protection. The protein is Nucleoid-associated protein CbuK_1603 of Coxiella burnetii (strain CbuK_Q154) (Coxiella burnetii (strain Q154)).